Reading from the N-terminus, the 442-residue chain is Serine--tRNA ligase (442 aa).

249-251 (TSE) is a binding site for L-serine. 280–282 (RSE) is a binding site for ATP. An L-serine-binding site is contributed by E303. 367-370 (EISS) serves as a coordination point for ATP. S402 is an L-serine binding site.

The protein belongs to the class-II aminoacyl-tRNA synthetase family. Type-1 seryl-tRNA synthetase subfamily. Homodimer. The tRNA molecule binds across the dimer.

Its subcellular location is the cytoplasm. It carries out the reaction tRNA(Ser) + L-serine + ATP = L-seryl-tRNA(Ser) + AMP + diphosphate + H(+). The enzyme catalyses tRNA(Sec) + L-serine + ATP = L-seryl-tRNA(Sec) + AMP + diphosphate + H(+). It functions in the pathway aminoacyl-tRNA biosynthesis; selenocysteinyl-tRNA(Sec) biosynthesis; L-seryl-tRNA(Sec) from L-serine and tRNA(Sec): step 1/1. Catalyzes the attachment of serine to tRNA(Ser). Is also able to aminoacylate tRNA(Sec) with serine, to form the misacylated tRNA L-seryl-tRNA(Sec), which will be further converted into selenocysteinyl-tRNA(Sec). The sequence is that of Serine--tRNA ligase from Acidovorax sp. (strain JS42).